The following is a 70-amino-acid chain: uncharacterized protein (70 aa).

This is an uncharacterized protein from Acidianus convivator (ATV).